The sequence spans 114 residues: Nucleoid-associated protein slr1847 (114 aa).

Belongs to the YbaB/EbfC family. Homodimer.

The protein localises to the cytoplasm. It localises to the nucleoid. Its function is as follows. Binds to DNA and alters its conformation. May be involved in regulation of gene expression, nucleoid organization and DNA protection. The polypeptide is Nucleoid-associated protein slr1847 (Synechocystis sp. (strain ATCC 27184 / PCC 6803 / Kazusa)).